Consider the following 167-residue polypeptide: Transcription antitermination protein NusB (167 aa).

Belongs to the NusB family.

Its function is as follows. Involved in transcription antitermination. Required for transcription of ribosomal RNA (rRNA) genes. Binds specifically to the boxA antiterminator sequence of the ribosomal RNA (rrn) operons. The sequence is that of Transcription antitermination protein NusB from Nitrosomonas europaea (strain ATCC 19718 / CIP 103999 / KCTC 2705 / NBRC 14298).